The sequence spans 165 residues: Shikimate kinase (165 aa).

An ATP-binding site is contributed by 11-16; sequence GAGKTT. Residue Thr-15 participates in Mg(2+) binding. Substrate is bound by residues Asp-33, Arg-57, and Gly-78. Arg-116 lines the ATP pocket. Arg-134 is a substrate binding site.

The protein belongs to the shikimate kinase family. Monomer. The cofactor is Mg(2+).

The protein localises to the cytoplasm. It catalyses the reaction shikimate + ATP = 3-phosphoshikimate + ADP + H(+). It functions in the pathway metabolic intermediate biosynthesis; chorismate biosynthesis; chorismate from D-erythrose 4-phosphate and phosphoenolpyruvate: step 5/7. Catalyzes the specific phosphorylation of the 3-hydroxyl group of shikimic acid using ATP as a cosubstrate. The sequence is that of Shikimate kinase from Bacillus cytotoxicus (strain DSM 22905 / CIP 110041 / 391-98 / NVH 391-98).